Reading from the N-terminus, the 284-residue chain is Diaminopimelate epimerase (284 aa).

Substrate-binding residues include Asn-14 and Asn-67. Cys-76 (proton donor) is an active-site residue. Residues 77–78 (GN), Asn-166, Asn-199, and 217–218 (ER) contribute to the substrate site. The active-site Proton acceptor is the Cys-226. 227 to 228 (GT) is a binding site for substrate.

Belongs to the diaminopimelate epimerase family. As to quaternary structure, homodimer.

It localises to the cytoplasm. The catalysed reaction is (2S,6S)-2,6-diaminopimelate = meso-2,6-diaminopimelate. It functions in the pathway amino-acid biosynthesis; L-lysine biosynthesis via DAP pathway; DL-2,6-diaminopimelate from LL-2,6-diaminopimelate: step 1/1. Its function is as follows. Catalyzes the stereoinversion of LL-2,6-diaminopimelate (L,L-DAP) to meso-diaminopimelate (meso-DAP), a precursor of L-lysine and an essential component of the bacterial peptidoglycan. This Bacillus velezensis (strain DSM 23117 / BGSC 10A6 / LMG 26770 / FZB42) (Bacillus amyloliquefaciens subsp. plantarum) protein is Diaminopimelate epimerase.